The sequence spans 1544 residues: Zinc finger protein GLI2 (1544 aa).

Positions 1–26 (METSAPAPALEKKEAKSGLLEDSSFP) are disordered. Phosphoserine occurs at positions 145, 230, 232, and 238. Residues 338 to 364 (SSSSSNCLNDANQNKQNSESAVSSTVN) form a disordered region. A Phosphoserine; by DYRK2 modification is found at S385. The C2H2-type 1 zinc-finger motif lies at 417 to 444 (TNCHWADCTKEYDTQEQLVHHINNEHIH). Residues 455–477 (QACTREQKPFKAQYMLVVHMRRH) form a C2H2-type 2; degenerate zinc finger. C2H2-type zinc fingers lie at residues 483–507 (HKCT…LRSH), 513–538 (YVCE…NRTH), and 544–569 (YICK…KTVH). 2 disordered regions span residues 557–619 (DPSS…TSHT) and 635–682 (GLCQ…ALAD). The segment covering 569-585 (HGPDAHVTKKQRNDVHV) has biased composition (basic and acidic residues). Low complexity predominate over residues 637–657 (CQSSPGAQSSCSSEPSPLGSA). S707 is modified (phosphoserine). T708 bears the Phosphothreonine mark. The residue at position 740 (K740) is an N6-acetyllysine; by EP300. 6 disordered regions span residues 781–800 (SQLQ…AYTV), 805–861 (SGIS…PGLL), 908–963 (ALPG…RRPD), 995–1016 (VQSH…RPPS), 1166–1220 (FGQY…CLGM), and 1422–1457 (GGCP…VSST). Polar residues-rich tracts occupy residues 790-800 (STSTMSSAYTV) and 805-814 (SGISPYFSSR). Residues 954–963 (RASDPVRRPD) show a composition bias toward basic and acidic residues. Position 997 is a phosphoserine; by DYRK2 (S997). Polar residues-rich tracts occupy residues 997–1009 (SHPS…TRNA), 1173–1190 (NPQS…TQPH), and 1200–1209 (SRGSYTQQPR).

It belongs to the GLI C2H2-type zinc-finger protein family. In terms of assembly, interacts with ZIC1 and ZIC2. Interacts with STK36. Interacts with SUFU; this inhibits transcriptional activation mediated by GLI2. Interacts (via C-terminal internal region) with FOXC1 (via N-terminus); this interaction is direct and increases GLI2 DNA-binding and transcriptional activity through a smoothened (SMO)-independent Hedgehog (Hh) signaling pathway. In terms of processing, phosphorylated in vitro by ULK3. Phosphorylated by DYRK2; this inhibits GLI2 transcription factor activity and promotes proteasomal degradation of GLI2. Acetylation at Lys-740 inhibits Hh target gene expression, probably by impeding entry into chromatin thus preventing promoter occupancy.

Its subcellular location is the nucleus. The protein resides in the cytoplasm. It is found in the cell projection. The protein localises to the cilium. Functions as a transcription regulator in the hedgehog (Hh) pathway. Functions as a transcriptional activator. May also function as transcriptional repressor. Requires STK36 for full transcriptional activator activity. Binds to the DNA sequence 5'-GAACCACCCA-3' which is part of the TRE-2S regulatory element. Is involved in the smoothened (SHH) signaling pathway. Required for normal skeleton development. This is Zinc finger protein GLI2 from Mus musculus (Mouse).